The following is an 865-amino-acid chain: Alanine--tRNA ligase (865 aa).

The Zn(2+) site is built by His554, His558, Cys656, and His660.

This sequence belongs to the class-II aminoacyl-tRNA synthetase family. It depends on Zn(2+) as a cofactor.

It localises to the cytoplasm. It catalyses the reaction tRNA(Ala) + L-alanine + ATP = L-alanyl-tRNA(Ala) + AMP + diphosphate. Functionally, catalyzes the attachment of alanine to tRNA(Ala) in a two-step reaction: alanine is first activated by ATP to form Ala-AMP and then transferred to the acceptor end of tRNA(Ala). Also edits incorrectly charged Ser-tRNA(Ala) and Gly-tRNA(Ala) via its editing domain. This is Alanine--tRNA ligase from Francisella tularensis subsp. holarctica (strain LVS).